The following is a 134-amino-acid chain: Proline-rich nuclear receptor coactivator 2 (134 aa).

Residues 1–74 form a disordered region; it reads MGGGERYNIP…NNSNWNASLS (74 aa). 2 stretches are compositionally biased toward polar residues: residues 11–24 and 52–61; these read DPQS…QQQH and SAVQNGGKTK. Low complexity predominate over residues 62–74; that stretch reads SLSNNSNWNASLS. An SH3-binding motif is present at residues 94 to 100; that stretch reads SEPPSPS.

Belongs to the PNRC family. PNRC2 subfamily. Interacts with UPF1/RENT1; preferentially interacts with hyperphosphorylated form. Interacts with DCP1A. Interacts with many nuclear receptors including ESR1, ESRRA, ESRRG, NR3C1/GR, NR5A1, PGR, TR, RAR and RXR.

The protein localises to the nucleus. The protein resides in the cytoplasm. It is found in the P-body. Involved in nonsense-mediated mRNA decay (NMD) by acting as a bridge between the mRNA decapping complex and the NMD machinery. May act by targeting the NMD machinery to the P-body and recruiting the decapping machinery to aberrant mRNAs. Required for UPF1/RENT1 localization to the P-body. Plays a role in glucocorticoid receptor-mediated mRNA degradation by interacting with the glucocorticoid receptor NR3C1 in a ligand-dependent manner when it is bound to the 5' UTR of target mRNAs and recruiting the RNA helicase UPF1 and the mRNA-decapping enzyme DCP1A, leading to RNA decay. Also acts as a nuclear receptor coactivator. May play a role in controlling the energy balance between energy storage and energy expenditure. The sequence is that of Proline-rich nuclear receptor coactivator 2 (Pnrc2) from Rattus norvegicus (Rat).